The primary structure comprises 1335 residues: Regulatory-associated protein of mTOR (1335 aa).

2 positions are modified to phosphoserine: Ser44 and Ser122. A Phosphoserine; by MAPK8 modification is found at Ser696. The O-linked (GlcNAc) threonine glycan is linked to Thr700. Thr706 carries the phosphothreonine; by MAPK8 modification. 2 positions are modified to phosphoserine; by RPS6KA1: Ser719 and Ser721. Residue Ser722 is modified to Phosphoserine; by AMPK and RPS6KA1. Ser738 carries the phosphoserine modification. Residues 749-771 are disordered; it reads GSSVAFSPGNLSTSSSASSTLGS. Over residues 755–771 the composition is skewed to low complexity; it reads SPGNLSTSSSASSTLGS. Residue Ser791 is modified to Phosphoserine. Ser792 carries the post-translational modification Phosphoserine; by AMPK. 2 positions are modified to phosphoserine: Ser836 and Ser855. A compositionally biased stretch (polar residues) spans 853–866; sequence TSSLTQSAPASPTN. The disordered stretch occupies residues 853 to 942; the sequence is TSSLTQSAPA…GPDQTTDDAD (90 aa). Ser859 carries the post-translational modification Phosphoserine; by MTOR. At Ser863 the chain carries Phosphoserine; by MAPK8, MTOR and NLK. The residue at position 865 (Thr865) is a Phosphothreonine. The residue at position 877 (Ser877) is a Phosphoserine. The segment covering 877–887 has biased composition (low complexity); the sequence is SPPASSTSSCS. A compositionally biased stretch (polar residues) spans 888–898; that stretch reads LTNDVAKQTVS. Residues Lys932 and Lys948 each participate in a glycyl lysine isopeptide (Lys-Gly) (interchain with G-Cter in ubiquitin) cross-link. Ser982 is subject to Phosphoserine. WD repeat units follow at residues 1020 to 1061, 1065 to 1106, 1121 to 1160, 1164 to 1203, 1209 to 1249, 1251 to 1291, and 1299 to 1335; these read NRNP…DYFH, PRYT…EKNP, TTRG…KVQD, GADS…SECR, EHTA…SVNV, QIVK…NNIK, and QRVG…KRVR. An N6-acetyllysine modification is found at Lys1097.

It belongs to the WD repeat RAPTOR family. In terms of assembly, part of the mechanistic target of rapamycin complex 1 (mTORC1) which contains MTOR, MLST8 and RPTOR. mTORC1 associates with AKT1S1/PRAS40, which inhibits its activity. mTORC1 associates with DEPTOR, which regulates its activity. mTORC1 binds to and is inhibited by FKBP12-rapamycin. Forms a complex with MTOR under both leucine-rich and -poor conditions. Interacts with (via TOS motifs) EIF4EBP1 and RPS6KB1; interaction is independent of its association with MTOR. Binds preferentially to poorly or non-phosphorylated forms of EIF4EBP1, and this binding is critical to the ability of MTOR to catalyze phosphorylation. Interacts with ULK1 in a nutrient-dependent manner; the interaction is reduced during starvation. Interacts with GTP-bound form of RagA/RRAGA or RagB/RRAGB and GDP-bound form of RagC/RRAGC or RagD/RRAGD, promoting recruitment of mTORC1 to the lysosomes. Interacts (when phosphorylated by AMPK) with 14-3-3 protein, leading to inhibition of its activity. Interacts with SPAG5; SPAG5 competes with MTOR for RPTOR-binding, resulting in decreased mTORC1 formation. Interacts with WAC; WAC positively regulates MTOR activity by promoting the assembly of the TTT complex composed of TELO2, TTI1 and TTI2 and the RUVBL complex composed of RUVBL1 and RUVBL2 into the TTT-RUVBL complex which leads to the dimerization of the mTORC1 complex and its subsequent activation. Interacts with G3BP1. The complex formed with G3BP1 and SPAG5 is increased by oxidative stress. Interacts with HTR6. Interacts with PIH1D1. Interacts with LARP1. Interacts with BRAT1. Interacts with SIK3. Interacts with SLC38A7; this interaction mediates the recruitment of mTORC1 to the lysosome and its subsequent activation. Insulin-stimulated phosphorylation at Ser-863 by MTOR and MAPK8 regulates mTORC1 activity. Phosphorylated at Ser-863 by NLK in response to stress, disrupting the interaction with small GTPases Rag (RagA/RRAGA, RagB/RRAGB, RagC/RRAGC and/or RagD/RRAGD), thereby preventing lysosome recruitment and activation of the mTORC1 complex. Osmotic stress also induces phosphorylation at Ser-696, Thr-706 and Ser-863 by MAPK8. Ser-863 phosphorylation is required for phosphorylation at Ser-855 and Ser-859. In response to nutrient limitation, phosphorylated at Ser-722 and Ser-792 by AMPK; phosphorylation promotes interaction with 14-3-3 proteins, leading to negative regulation of the mTORC1 complex. Phosphorylation at Ser-722 and Ser-792 by AMPK in response to glucose starvation inhibits O-GlcNAcylation by OGT and subsequent activation of mTORC1. In response to growth factors, phosphorylated at Ser-719, Ser-721 and Ser-722 by RPS6KA1, which stimulates mTORC1 activity. Phosphorylation at Ser-791 by PKA downstream of cAMP inhibits the mTORC1 complex. Phosphorylated at Ser-877 by TBK1, leading to negative regulation of the mTORC1 complex. Post-translationally, O-GlcNAcylated by OGT upon glucose sufficiency, promoting interaction with small GTPases Rag (RagA/RRAGA, RagB/RRAGB, RagC/RRAGC and/or RagD/RRAGD) and subsequent recruitment of mTORC1 to lysosomal membranes, leading to activation of the mTORC1 complex. Phosphorylation at Ser-722 and Ser-792 by AMPK in response to glucose starvation inhibits O-GlcNAcylation. In terms of processing, acetylation at Lys-1097 by EP300/p300 in response to leucine metabolite acetyl-coA promotes its activity, leading to activation of the mTORC1 complex. Acetylation is decreased in response to fasting. Phosphorylated at Ser-877 by TBK1, leading to negative regulation of the mTORC1 complex. Ubiquitinated, leading to its degradation by the proteasome. Deubiquitinated by OTUB1 via a non-catalytic mechanism. Ubiquitinated by an E3 ubiquitin ligase complex containing VHL.

The protein localises to the cytoplasm. It is found in the lysosome. The protein resides in the cytoplasmic granule. Component of the mechanistic target of rapamycin complex 1 (mTORC1), an evolutionarily conserved central nutrient sensor that stimulates anabolic reactions and macromolecule biosynthesis to promote cellular biomass generation and growth. In response to nutrients, growth factors or amino acids, mTORC1 is recruited to the lysosome membrane and promotes protein, lipid and nucleotide synthesis by phosphorylating several substrates, such as ribosomal protein S6 kinase (RPS6KB1 and RPS6KB2) and EIF4EBP1 (4E-BP1). In the same time, it inhibits catabolic pathways by phosphorylating the autophagy initiation components ULK1 and ATG13, as well as transcription factor TFEB, a master regulators of lysosomal biogenesis and autophagy. The mTORC1 complex is inhibited in response to starvation and amino acid depletion. Within the mTORC1 complex, RPTOR acts both as a molecular adapter, which (1) mediates recruitment of mTORC1 to lysosomal membranes via interaction with small GTPases Rag (RagA/RRAGA, RagB/RRAGB, RagC/RRAGC and/or RagD/RRAGD), and a (2) substrate-specific adapter, which promotes substrate specificity by binding to TOS motif-containing proteins and direct them towards the active site of the MTOR kinase domain for phosphorylation. mTORC1 complex regulates many cellular processes, such as odontoblast and osteoclast differentiation or neuronal transmission. mTORC1 complex in excitatory neuronal transmission is required for the prosocial behavior induced by the psychoactive substance lysergic acid diethylamide (LSD). In Mus musculus (Mouse), this protein is Regulatory-associated protein of mTOR.